A 569-amino-acid polypeptide reads, in one-letter code: Rab GTPase-binding effector protein 2 (569 aa).

Disordered stretches follow at residues 1–38 (MAAA…AELG), 181–267 (QRRP…ASLV), and 388–414 (RAEQ…PSSV). Ala-2 carries the post-translational modification N-acetylalanine. Over residues 29-38 (EGANGEAELG) the composition is skewed to low complexity. Residues 34–184 (EAELGELSRL…ELIQEIQRRP (151 aa)) are a coiled coil. Phosphoserine occurs at positions 189, 193, 200, and 204. Residues 245-257 (SSSSLPRSRQGLS) are compositionally biased toward low complexity. The stretch at 292–391 (WEQLQMEGRQ…EENQGLRAEQ (100 aa)) forms a coiled coil. A compositionally biased stretch (low complexity) spans 393–403 (PSSAPQGPQQE). A coiled-coil region spans residues 423 to 523 (RTRQEARAQL…LQAELETSEQ (101 aa)).

This sequence belongs to the rabaptin family. Heterodimer with RABGEF1. The dimer binds RAB5A that has been activated by GTP-binding. Interacts with SDCCAG8; this interaction is important for ciliogenesis regulation. Interacts with RAB4; this interaction may mediate VEGFR2 cell surface expression.

It localises to the cytoplasm. Its subcellular location is the early endosome. The protein localises to the cytoskeleton. The protein resides in the microtubule organizing center. It is found in the centrosome. It localises to the cilium basal body. Functionally, plays a role in membrane trafficking and in homotypic early endosome fusion. Participates in arteriogenesis by regulating vascular endothelial growth factor receptor 2/VEGFR2 cell surface expression and endosomal trafficking. By interacting with SDCCAG8, localizes to centrosomes and plays a critical role in ciliogenesis. This is Rab GTPase-binding effector protein 2 (RABEP2) from Pongo abelii (Sumatran orangutan).